The chain runs to 273 residues: MTDVRRVFFVSDRTGITAEALGHSLMTQFSVTTEQATIPFVDTAERARAALRRITAASAEDDHPPIVFSTIIDPEVLAVLRESEHIVLFDFFDTFIAPLERELEVPSNHVIGRSHGIADDSTYDVRIDAMNFALHHDDGATHQHYGRADVILVGVSRSGKTPASLYLALQFGVYAANYPLTDDDLIATRLPRALVSHRAKLFGLTIDPDRLHQIRSERRPNSRYAELRQCEYEVARAEAMFRREGIPYLDITTMSIEEISSTVIHQHALTRRV.

Residue 154–161 (GVSRSGKT) participates in ADP binding.

It belongs to the pyruvate, phosphate/water dikinase regulatory protein family. PSRP subfamily.

It carries out the reaction [pyruvate, water dikinase] + ADP = [pyruvate, water dikinase]-phosphate + AMP + H(+). It catalyses the reaction [pyruvate, water dikinase]-phosphate + phosphate + H(+) = [pyruvate, water dikinase] + diphosphate. Its function is as follows. Bifunctional serine/threonine kinase and phosphorylase involved in the regulation of the phosphoenolpyruvate synthase (PEPS) by catalyzing its phosphorylation/dephosphorylation. The polypeptide is Putative phosphoenolpyruvate synthase regulatory protein (Halorhodospira halophila (strain DSM 244 / SL1) (Ectothiorhodospira halophila (strain DSM 244 / SL1))).